The following is a 388-amino-acid chain: Succinate--CoA ligase [ADP-forming] subunit beta (388 aa).

An ATP-grasp domain is found at 9 to 245 (KALLKEYGMP…KSQENERELK (237 aa)). ATP contacts are provided by residues Lys-46, 53-55 (GRG), Glu-100, Tyr-103, and Glu-108. Residues Asn-200 and Asp-214 each contribute to the Mg(2+) site. Residues Asn-265 and 322–324 (GIV) contribute to the substrate site.

It belongs to the succinate/malate CoA ligase beta subunit family. As to quaternary structure, heterotetramer of two alpha and two beta subunits. The cofactor is Mg(2+).

The catalysed reaction is succinate + ATP + CoA = succinyl-CoA + ADP + phosphate. It carries out the reaction GTP + succinate + CoA = succinyl-CoA + GDP + phosphate. It functions in the pathway carbohydrate metabolism; tricarboxylic acid cycle; succinate from succinyl-CoA (ligase route): step 1/1. Its function is as follows. Succinyl-CoA synthetase functions in the citric acid cycle (TCA), coupling the hydrolysis of succinyl-CoA to the synthesis of either ATP or GTP and thus represents the only step of substrate-level phosphorylation in the TCA. The beta subunit provides nucleotide specificity of the enzyme and binds the substrate succinate, while the binding sites for coenzyme A and phosphate are found in the alpha subunit. This is Succinate--CoA ligase [ADP-forming] subunit beta from Acinetobacter baumannii (strain AB307-0294).